The primary structure comprises 397 residues: Enoyl-[acyl-carrier-protein] reductase [NADH] (397 aa).

Residues 48-53 (GASTGY), 74-75 (FE), 111-112 (DA), and 139-140 (VA) each bind NAD(+). Tyrosine 225 contacts substrate. Tyrosine 235 (proton donor) is an active-site residue. Residues lysine 244 and 273 to 275 (VVT) each bind NAD(+).

Belongs to the TER reductase family. In terms of assembly, monomer.

The enzyme catalyses a 2,3-saturated acyl-[ACP] + NAD(+) = a (2E)-enoyl-[ACP] + NADH + H(+). The protein operates within lipid metabolism; fatty acid biosynthesis. Its function is as follows. Involved in the final reduction of the elongation cycle of fatty acid synthesis (FAS II). Catalyzes the reduction of a carbon-carbon double bond in an enoyl moiety that is covalently linked to an acyl carrier protein (ACP). The sequence is that of Enoyl-[acyl-carrier-protein] reductase [NADH] from Burkholderia thailandensis (strain ATCC 700388 / DSM 13276 / CCUG 48851 / CIP 106301 / E264).